Consider the following 306-residue polypeptide: Glutaminase (306 aa).

Substrate-binding residues include Ser-64, Asn-115, Glu-159, Asn-166, Tyr-190, Tyr-242, and Val-260.

This sequence belongs to the glutaminase family. In terms of assembly, homotetramer.

The enzyme catalyses L-glutamine + H2O = L-glutamate + NH4(+). In Aliivibrio fischeri (strain MJ11) (Vibrio fischeri), this protein is Glutaminase.